Here is a 192-residue protein sequence, read N- to C-terminus: MASRGKTETNKLKVNIEEQLNRLLAQLQDIEELKEDITQEEYDETKKDTLEQMKEFEQSLKKMMSGDMTLVSELGGVQLAIQAAVSQAFKTPEVIKLFAKKDQNSLRTKLGNIQRDVQLGKISKDAYIDQSVEILAALKKLDFVLSPEEEAFLEKHKSRSMSEFEKVSSNIGQGTKENILSSAASQIKNASK.

Residues 6 to 65 adopt a coiled-coil conformation; the sequence is KTETNKLKVNIEEQLNRLLAQLQDIEELKEDITQEEYDETKKDTLEQMKEFEQSLKKMMS.

Belongs to the CTNNBIP1 family.

In Dictyostelium discoideum (Social amoeba), this protein is Protein LZIC (lzic).